Reading from the N-terminus, the 285-residue chain is Bifunctional protein FolD (285 aa).

Residues 166 to 168 and Ile232 contribute to the NADP(+) site; that span reads GAS.

It belongs to the tetrahydrofolate dehydrogenase/cyclohydrolase family. Homodimer.

The catalysed reaction is (6R)-5,10-methylene-5,6,7,8-tetrahydrofolate + NADP(+) = (6R)-5,10-methenyltetrahydrofolate + NADPH. The enzyme catalyses (6R)-5,10-methenyltetrahydrofolate + H2O = (6R)-10-formyltetrahydrofolate + H(+). The protein operates within one-carbon metabolism; tetrahydrofolate interconversion. Functionally, catalyzes the oxidation of 5,10-methylenetetrahydrofolate to 5,10-methenyltetrahydrofolate and then the hydrolysis of 5,10-methenyltetrahydrofolate to 10-formyltetrahydrofolate. The chain is Bifunctional protein FolD from Actinobacillus succinogenes (strain ATCC 55618 / DSM 22257 / CCUG 43843 / 130Z).